Consider the following 216-residue polypeptide: uncharacterized protein (216 aa).

Residues threonine 54–leucine 215 enclose the Integrase catalytic domain.

It belongs to the transposase IS3/IS150/IS904 family.

This is an uncharacterized protein from Haemophilus influenzae (strain ATCC 51907 / DSM 11121 / KW20 / Rd).